The chain runs to 230 residues: Proteasome subunit beta 2 (230 aa).

Positions 1-10 are enriched in basic and acidic residues; it reads MHDPENRLTD. The interval 1 to 29 is disordered; that stretch reads MHDPENRLTDAYEPEVGNLPNEDSGRDEE. Positions 1-35 are cleaved as a propeptide — removed in mature form; by autocatalysis; that stretch reads MHDPENRLTDAYEPEVGNLPNEDSGRDEENVVKTG. Thr36 acts as the Nucleophile in catalysis.

It belongs to the peptidase T1B family. The 20S proteasome core is composed of 14 alpha and 14 beta subunits that assemble into four stacked heptameric rings, resulting in a barrel-shaped structure. The two inner rings, each composed of seven catalytic beta subunits, are sandwiched by two outer rings, each composed of seven alpha subunits. The catalytic chamber with the active sites is on the inside of the barrel. Has a gated structure, the ends of the cylinder being occluded by the N-termini of the alpha-subunits. Is capped at one or both ends by the proteasome regulatory ATPase, PAN.

The protein resides in the cytoplasm. The catalysed reaction is Cleavage of peptide bonds with very broad specificity.. The formation of the proteasomal ATPase PAN-20S proteasome complex, via the docking of the C-termini of PAN into the intersubunit pockets in the alpha-rings, triggers opening of the gate for substrate entry. Interconversion between the open-gate and close-gate conformations leads to a dynamic regulation of the 20S proteasome proteolysis activity. Functionally, component of the proteasome core, a large protease complex with broad specificity involved in protein degradation. This is Proteasome subunit beta 2 from Haloarcula marismortui (strain ATCC 43049 / DSM 3752 / JCM 8966 / VKM B-1809) (Halobacterium marismortui).